A 621-amino-acid polypeptide reads, in one-letter code: Pre-mRNA-processing protein 45 (621 aa).

5 disordered regions span residues 1 to 73 (MSAT…YANG), 137 to 164 (SQRT…SNTE), 220 to 251 (AQRD…RSPP), 347 to 438 (RARE…ELRM), and 542 to 621 (GKND…EHDS). Residues 36–51 (PSTSSSSSALVSTSSP) are compositionally biased toward low complexity. Composition is skewed to basic and acidic residues over residues 140–164 (TDIK…SNTE) and 220–229 (AQRDPLEPPR). Residues 239 to 248 (PPSPPPPVLR) show a composition bias toward pro residues. Residues 364-380 (GRDDDVASRLADSDARP) show a composition bias toward basic and acidic residues. Residues 403-417 (DSDESAASDEEDDEG) show a composition bias toward acidic residues. 2 stretches are compositionally biased toward basic and acidic residues: residues 418–437 (ARER…RELR) and 594–621 (EDAK…EHDS).

The protein belongs to the SNW family. As to quaternary structure, associated with the spliceosome.

It localises to the nucleus. Involved in pre-mRNA splicing. The protein is Pre-mRNA-processing protein 45 (PRP45) of Mycosarcoma maydis (Corn smut fungus).